Reading from the N-terminus, the 376-residue chain is Succinate--CoA ligase [ADP-forming] subunit beta (376 aa).

Positions 9–237 (KEIFSKYGIP…PTEEEKVEAD (229 aa)) constitute an ATP-grasp domain. Residues Lys-46, 53–55 (GRG), Val-95, and Glu-100 contribute to the ATP site. The Mg(2+) site is built by Asn-192 and Asp-206. Substrate contacts are provided by residues Asn-257 and 314–316 (GIT).

It belongs to the succinate/malate CoA ligase beta subunit family. Heterotetramer of two alpha and two beta subunits. The cofactor is Mg(2+).

The catalysed reaction is succinate + ATP + CoA = succinyl-CoA + ADP + phosphate. It carries out the reaction GTP + succinate + CoA = succinyl-CoA + GDP + phosphate. The protein operates within carbohydrate metabolism; tricarboxylic acid cycle; succinate from succinyl-CoA (ligase route): step 1/1. In terms of biological role, succinyl-CoA synthetase functions in the citric acid cycle (TCA), coupling the hydrolysis of succinyl-CoA to the synthesis of either ATP or GTP and thus represents the only step of substrate-level phosphorylation in the TCA. The beta subunit provides nucleotide specificity of the enzyme and binds the substrate succinate, while the binding sites for coenzyme A and phosphate are found in the alpha subunit. This is Succinate--CoA ligase [ADP-forming] subunit beta from Bacteroides thetaiotaomicron (strain ATCC 29148 / DSM 2079 / JCM 5827 / CCUG 10774 / NCTC 10582 / VPI-5482 / E50).